Reading from the N-terminus, the 214-residue chain is Leucyl/phenylalanyl-tRNA--protein transferase (214 aa).

The protein belongs to the L/F-transferase family.

Its subcellular location is the cytoplasm. The catalysed reaction is N-terminal L-lysyl-[protein] + L-leucyl-tRNA(Leu) = N-terminal L-leucyl-L-lysyl-[protein] + tRNA(Leu) + H(+). It catalyses the reaction N-terminal L-arginyl-[protein] + L-leucyl-tRNA(Leu) = N-terminal L-leucyl-L-arginyl-[protein] + tRNA(Leu) + H(+). It carries out the reaction L-phenylalanyl-tRNA(Phe) + an N-terminal L-alpha-aminoacyl-[protein] = an N-terminal L-phenylalanyl-L-alpha-aminoacyl-[protein] + tRNA(Phe). Functionally, functions in the N-end rule pathway of protein degradation where it conjugates Leu, Phe and, less efficiently, Met from aminoacyl-tRNAs to the N-termini of proteins containing an N-terminal arginine or lysine. The polypeptide is Leucyl/phenylalanyl-tRNA--protein transferase (Cereibacter sphaeroides (strain ATCC 17029 / ATH 2.4.9) (Rhodobacter sphaeroides)).